The primary structure comprises 341 residues: DNA-directed RNA polymerase subunit alpha (341 aa).

Residues 1–233 form an alpha N-terminal domain (alpha-NTD) region; it reads MIQDEVPVSA…DLFLPFLHTE (233 aa). The alpha C-terminal domain (alpha-CTD) stretch occupies residues 262–341; that stretch reads DRMAKEVAFK…NLPRNKFSID (80 aa).

The protein belongs to the RNA polymerase alpha chain family. In plastids the minimal PEP RNA polymerase catalytic core is composed of four subunits: alpha, beta, beta', and beta''. When a (nuclear-encoded) sigma factor is associated with the core the holoenzyme is formed, which can initiate transcription.

The protein resides in the plastid. Its subcellular location is the chloroplast. It carries out the reaction RNA(n) + a ribonucleoside 5'-triphosphate = RNA(n+1) + diphosphate. Functionally, DNA-dependent RNA polymerase catalyzes the transcription of DNA into RNA using the four ribonucleoside triphosphates as substrates. This is DNA-directed RNA polymerase subunit alpha from Angiopteris evecta (Mule's foot fern).